The sequence spans 332 residues: tRNA dimethylallyltransferase (332 aa).

14–21 (GPTASGKT) serves as a coordination point for ATP. 16–21 (TASGKT) provides a ligand contact to substrate. The interval 39–42 (DSMQ) is interaction with substrate tRNA. The disordered stretch occupies residues 313–332 (KRSSKHDCKPQHPRSSTREL). The span at 317–332 (KHDCKPQHPRSSTREL) shows a compositional bias: basic and acidic residues.

The protein belongs to the IPP transferase family. Monomer. The cofactor is Mg(2+).

It catalyses the reaction adenosine(37) in tRNA + dimethylallyl diphosphate = N(6)-dimethylallyladenosine(37) in tRNA + diphosphate. Its function is as follows. Catalyzes the transfer of a dimethylallyl group onto the adenine at position 37 in tRNAs that read codons beginning with uridine, leading to the formation of N6-(dimethylallyl)adenosine (i(6)A). This Staphylococcus haemolyticus (strain JCSC1435) protein is tRNA dimethylallyltransferase.